We begin with the raw amino-acid sequence, 45 residues long: Large ribosomal subunit protein bL34c (45 aa).

The protein belongs to the bacterial ribosomal protein bL34 family.

It localises to the plastid. The protein localises to the chloroplast. This Emiliania huxleyi (Coccolithophore) protein is Large ribosomal subunit protein bL34c.